Consider the following 362-residue polypeptide: Dual-specificity RNA methyltransferase RlmN (362 aa).

Catalysis depends on Glu91, which acts as the Proton acceptor. Residues 97–333 enclose the Radical SAM core domain; sequence EDDRGTLCVS…VTTRKTRGED (237 aa). Cys104 and Cys338 are disulfide-bonded. 3 residues coordinate [4Fe-4S] cluster: Cys111, Cys115, and Cys118. Residues 164–165, Ser196, 218–220, and Asn295 each bind S-adenosyl-L-methionine; these read GE and SLH. Cys338 (S-methylcysteine intermediate) is an active-site residue.

It belongs to the radical SAM superfamily. RlmN family. Requires [4Fe-4S] cluster as cofactor.

It is found in the cytoplasm. The enzyme catalyses adenosine(2503) in 23S rRNA + 2 reduced [2Fe-2S]-[ferredoxin] + 2 S-adenosyl-L-methionine = 2-methyladenosine(2503) in 23S rRNA + 5'-deoxyadenosine + L-methionine + 2 oxidized [2Fe-2S]-[ferredoxin] + S-adenosyl-L-homocysteine. It catalyses the reaction adenosine(37) in tRNA + 2 reduced [2Fe-2S]-[ferredoxin] + 2 S-adenosyl-L-methionine = 2-methyladenosine(37) in tRNA + 5'-deoxyadenosine + L-methionine + 2 oxidized [2Fe-2S]-[ferredoxin] + S-adenosyl-L-homocysteine. In terms of biological role, specifically methylates position 2 of adenine 2503 in 23S rRNA and position 2 of adenine 37 in tRNAs. m2A2503 modification seems to play a crucial role in the proofreading step occurring at the peptidyl transferase center and thus would serve to optimize ribosomal fidelity. The sequence is that of Dual-specificity RNA methyltransferase RlmN from Methylobacillus flagellatus (strain ATCC 51484 / DSM 6875 / VKM B-1610 / KT).